The chain runs to 313 residues: tRNA dimethylallyltransferase (313 aa).

ATP is bound at residue G17–T24. A substrate-binding site is contributed by T19–T24. Interaction with substrate tRNA regions lie at residues D42 to L45, Q166 to R170, R247 to R252, and K280 to R287.

It belongs to the IPP transferase family. In terms of assembly, monomer. Requires Mg(2+) as cofactor.

The catalysed reaction is adenosine(37) in tRNA + dimethylallyl diphosphate = N(6)-dimethylallyladenosine(37) in tRNA + diphosphate. Catalyzes the transfer of a dimethylallyl group onto the adenine at position 37 in tRNAs that read codons beginning with uridine, leading to the formation of N6-(dimethylallyl)adenosine (i(6)A). This chain is tRNA dimethylallyltransferase, found in Photorhabdus laumondii subsp. laumondii (strain DSM 15139 / CIP 105565 / TT01) (Photorhabdus luminescens subsp. laumondii).